The chain runs to 161 residues: Dihydrofolate reductase (161 aa).

Residues 2 to 157 (TLSIIVAHDK…IPHTFLHLVR (156 aa)) form the DHFR domain. Residue 6 to 8 (IVA) participates in substrate binding. NADP(+) is bound by residues 7–8 (VA) and 15–20 (IGYQNQ). Asp28 is a binding site for substrate. 44 to 47 (GRKT) serves as a coordination point for NADP(+). Arg58 lines the substrate pocket. Residues 63-66 (LTNQ) and 93-98 (FGGQTL) contribute to the NADP(+) site. Thr112 provides a ligand contact to substrate.

Belongs to the dihydrofolate reductase family.

The catalysed reaction is (6S)-5,6,7,8-tetrahydrofolate + NADP(+) = 7,8-dihydrofolate + NADPH + H(+). It functions in the pathway cofactor biosynthesis; tetrahydrofolate biosynthesis; 5,6,7,8-tetrahydrofolate from 7,8-dihydrofolate: step 1/1. Its function is as follows. Key enzyme in folate metabolism. Catalyzes an essential reaction for de novo glycine and purine synthesis, and for DNA precursor synthesis. This Staphylococcus epidermidis protein is Dihydrofolate reductase (folA).